The following is a 239-amino-acid chain: ATP-dependent dethiobiotin synthetase BioD (239 aa).

13–18 (EIGKTV) provides a ligand contact to ATP. Position 17 (Thr17) interacts with Mg(2+). Lys38 is an active-site residue. Thr42 contacts substrate. Mg(2+) is bound by residues Lys59 and Glu111. ATP contacts are provided by residues 111–114 (EGAG), 175–176 (NQ), and 204–206 (PSL).

This sequence belongs to the dethiobiotin synthetase family. As to quaternary structure, homodimer. Requires Mg(2+) as cofactor.

It is found in the cytoplasm. It carries out the reaction (7R,8S)-7,8-diammoniononanoate + CO2 + ATP = (4R,5S)-dethiobiotin + ADP + phosphate + 3 H(+). It functions in the pathway cofactor biosynthesis; biotin biosynthesis; biotin from 7,8-diaminononanoate: step 1/2. In terms of biological role, catalyzes a mechanistically unusual reaction, the ATP-dependent insertion of CO2 between the N7 and N8 nitrogen atoms of 7,8-diaminopelargonic acid (DAPA, also called 7,8-diammoniononanoate) to form a ureido ring. This Geobacillus sp. (strain WCH70) protein is ATP-dependent dethiobiotin synthetase BioD.